The primary structure comprises 148 residues: Small ribosomal subunit protein bS6 (148 aa).

A disordered region spans residues 96–148 (HEEGQSAMLTRRDDRRERDGDDRPRRREGGFDRGDRGDRGPRRPRDNEAGEGA).

The protein belongs to the bacterial ribosomal protein bS6 family.

Binds together with bS18 to 16S ribosomal RNA. The polypeptide is Small ribosomal subunit protein bS6 (Brucella abortus biovar 1 (strain 9-941)).